We begin with the raw amino-acid sequence, 742 residues long: 5-methyltetrahydropteroyltriglutamate--homocysteine methyltransferase (742 aa).

5-methyltetrahydropteroyltri-L-glutamate-binding positions include 18–21 (REWK) and K112. Residues 420 to 422 (IGS) and E473 contribute to the L-homocysteine site. L-methionine contacts are provided by residues 420 to 422 (IGS) and E473. 5-methyltetrahydropteroyltri-L-glutamate is bound at residue W550. D588 is a binding site for L-homocysteine. L-methionine is bound at residue D588. E594 contacts 5-methyltetrahydropteroyltri-L-glutamate. Zn(2+) contacts are provided by H630, C632, and E654. The active-site Proton donor is the H683. Position 715 (C715) interacts with Zn(2+).

The protein belongs to the vitamin-B12 independent methionine synthase family. It depends on Zn(2+) as a cofactor.

It catalyses the reaction 5-methyltetrahydropteroyltri-L-glutamate + L-homocysteine = tetrahydropteroyltri-L-glutamate + L-methionine. It participates in amino-acid biosynthesis; L-methionine biosynthesis via de novo pathway; L-methionine from L-homocysteine (MetE route): step 1/1. In terms of biological role, catalyzes the transfer of a methyl group from 5-methyltetrahydrofolate to homocysteine resulting in methionine formation. The protein is 5-methyltetrahydropteroyltriglutamate--homocysteine methyltransferase of Staphylococcus aureus (strain JH9).